The following is a 115-amino-acid chain: Secreted RxLR effector protein 2 (115 aa).

The first 22 residues, 1 to 22 (MICRSPLIVVMLFVIAAHTVLA), serve as a signal peptide directing secretion. A RxLR-dEER motif is present at residues 57–82 (RFLRQETTFEKKLGVNDVHAVHAEER).

This sequence belongs to the RxLR effector family.

The protein localises to the secreted. The protein resides in the host cytoplasm. Its subcellular location is the host nucleus. Functionally, effector that acts as a broad suppressor of cell death to interrupt plant immunity. Inhibits cell death induced by cell death-inducing proteins, including the PAMP elicitor INF1 from P.infestans. The chain is Secreted RxLR effector protein 2 from Plasmopara viticola (Downy mildew of grapevine).